The chain runs to 99 residues: A-type ATP synthase subunit F (99 aa).

Belongs to the V-ATPase F subunit family. As to quaternary structure, has multiple subunits with at least A(3), B(3), C, D, E, F, H, I and proteolipid K(x).

The protein resides in the cell membrane. Its function is as follows. Component of the A-type ATP synthase that produces ATP from ADP in the presence of a proton gradient across the membrane. The sequence is that of A-type ATP synthase subunit F from Methanococcus maripaludis (strain C5 / ATCC BAA-1333).